The sequence spans 128 residues: Ribonuclease P protein component (128 aa).

The protein belongs to the RnpA family. In terms of assembly, consists of a catalytic RNA component (M1 or rnpB) and a protein subunit.

The catalysed reaction is Endonucleolytic cleavage of RNA, removing 5'-extranucleotides from tRNA precursor.. Functionally, RNaseP catalyzes the removal of the 5'-leader sequence from pre-tRNA to produce the mature 5'-terminus. It can also cleave other RNA substrates such as 4.5S RNA. The protein component plays an auxiliary but essential role in vivo by binding to the 5'-leader sequence and broadening the substrate specificity of the ribozyme. The chain is Ribonuclease P protein component from Prochlorococcus marinus (strain MIT 9303).